A 349-amino-acid polypeptide reads, in one-letter code: Delta(7)-sterol 5(6)-desaturase ERG3A (349 aa).

Helical transmembrane passes span 84 to 104 (ITWI…YIFI), 124 to 144 (IIAA…FFLL), and 162 to 182 (LWYD…CIYW). The region spanning 170–296 (PLFLLFTDFC…FTAFDRMGGT (127 aa)) is the Fatty acid hydroxylase domain. The short motif at 184–188 (HRWLH) is the Histidine box-1 element. The short motif at 197 to 201 (HKLHH) is the Histidine box-2 element. Residues 227–247 (HIFPFIFPLQKMAYVALFVFV) traverse the membrane as a helical segment. The Histidine box-3 motif lies at 272-276 (HSLHH).

This sequence belongs to the sterol desaturase family.

It is found in the endoplasmic reticulum membrane. The enzyme catalyses episterol + 2 Fe(II)-[cytochrome b5] + O2 + 2 H(+) = 5-dehydroepisterol + 2 Fe(III)-[cytochrome b5] + 2 H2O. The protein operates within steroid metabolism; ergosterol biosynthesis. Functionally, C-5 sterol desaturase; part of the third module of ergosterol biosynthesis pathway that includes the late steps of the pathway. ERG3A and ERG3BB catalyze the introduction of a C-5 double bond in the B ring to produce 5-dehydroepisterol. The third module or late pathway involves the ergosterol synthesis itself through consecutive reactions that mainly occur in the endoplasmic reticulum (ER) membrane. Firstly, the squalene synthase ERG9 catalyzes the condensation of 2 farnesyl pyrophosphate moieties to form squalene, which is the precursor of all steroids. Squalene synthase is crucial for balancing the incorporation of farnesyl diphosphate (FPP) into sterol and nonsterol isoprene synthesis. Secondly, squalene is converted into lanosterol by the consecutive action of the squalene epoxidase ERG1 and the lanosterol synthase ERG7. Then, the delta(24)-sterol C-methyltransferase ERG6 methylates lanosterol at C-24 to produce eburicol. Eburicol is the substrate of the sterol 14-alpha demethylase encoded by CYP51A, CYP51B and CYP51C, to yield 4,4,24-trimethyl ergosta-8,14,24(28)-trienol. CYP51B encodes the enzyme primarily responsible for sterol 14-alpha-demethylation, and plays an essential role in ascospore formation. CYP51A encodes an additional sterol 14-alpha-demethylase, induced on ergosterol depletion and responsible for the intrinsic variation in azole sensitivity. The third CYP51 isoform, CYP51C, does not encode a sterol 14-alpha-demethylase, but is required for full virulence on host wheat ears. The C-14 reductase ERG24 then reduces the C14=C15 double bond which leads to 4,4-dimethylfecosterol. A sequence of further demethylations at C-4, involving the C-4 demethylation complex containing the C-4 methylsterol oxidases ERG25, the sterol-4-alpha-carboxylate 3-dehydrogenase ERG26 and the 3-keto-steroid reductase ERG27, leads to the production of fecosterol via 4-methylfecosterol. ERG28 has a role as a scaffold to help anchor ERG25, ERG26 and ERG27 to the endoplasmic reticulum. The C-8 sterol isomerase ERG2 then catalyzes the reaction which results in unsaturation at C-7 in the B ring of sterols and thus converts fecosterol to episterol. The sterol-C5-desaturases ERG3A and ERG3BB then catalyze the introduction of a C-5 double bond in the B ring to produce 5-dehydroepisterol. The C-22 sterol desaturases ERG5A and ERG5B further convert 5-dehydroepisterol into ergosta-5,7,22,24(28)-tetraen-3beta-ol by forming the C-22(23) double bond in the sterol side chain. Finally, ergosta-5,7,22,24(28)-tetraen-3beta-ol is substrate of the C-24(28) sterol reductase ERG4 to produce ergosterol. The chain is Delta(7)-sterol 5(6)-desaturase ERG3A from Gibberella zeae (strain ATCC MYA-4620 / CBS 123657 / FGSC 9075 / NRRL 31084 / PH-1) (Wheat head blight fungus).